We begin with the raw amino-acid sequence, 441 residues long: Glutamyl-tRNA reductase (441 aa).

Substrate-binding positions include 49 to 52 (TCNR), serine 109, 114 to 116 (EGQ), and glutamine 120. The active-site Nucleophile is cysteine 50. Residue 198 to 203 (GAGRMS) coordinates NADP(+).

The protein belongs to the glutamyl-tRNA reductase family. As to quaternary structure, homodimer.

It catalyses the reaction (S)-4-amino-5-oxopentanoate + tRNA(Glu) + NADP(+) = L-glutamyl-tRNA(Glu) + NADPH + H(+). It participates in porphyrin-containing compound metabolism; protoporphyrin-IX biosynthesis; 5-aminolevulinate from L-glutamyl-tRNA(Glu): step 1/2. It functions in the pathway porphyrin-containing compound metabolism; chlorophyll biosynthesis. Catalyzes the NADPH-dependent reduction of glutamyl-tRNA(Glu) to glutamate 1-semialdehyde (GSA). This Prochlorococcus marinus (strain NATL1A) protein is Glutamyl-tRNA reductase.